Consider the following 565-residue polypeptide: Laccase-12 (565 aa).

A signal peptide spans 1–24 (MTTVHTFSILLFFCSLFSASLIIA). 2 Plastocyanin-like domains span residues 32-148 (VIQE…PTPG) and 158-310 (RQTA…YKKT). A glycan (N-linked (GlcNAc...) asparagine) is linked at Asn78. Positions 82, 84, 127, and 129 each coordinate Cu cation. Residues Asn187, Asn203, Asn298, Asn325, Asn377, Asn387, Asn395, and Asn428 are each glycosylated (N-linked (GlcNAc...) asparagine). The 137-residue stretch at 413-549 (DFPSKPPVKF…AMAFLVDNGV (137 aa)) folds into the Plastocyanin-like 3 domain. Cu cation-binding residues include His466, His469, His471, His528, Cys529, His530, and His534.

It belongs to the multicopper oxidase family. The cofactor is Cu cation. In terms of tissue distribution, predominantly expressed in the inflorescence stem.

It is found in the secreted. The protein resides in the extracellular space. Its subcellular location is the apoplast. It carries out the reaction 4 hydroquinone + O2 = 4 benzosemiquinone + 2 H2O. Functionally, lignin degradation and detoxification of lignin-derived products. This is Laccase-12 (LAC12) from Arabidopsis thaliana (Mouse-ear cress).